A 110-amino-acid chain; its full sequence is UPF0122 protein SERP0802 (110 aa).

It belongs to the UPF0122 family.

In terms of biological role, might take part in the signal recognition particle (SRP) pathway. This is inferred from the conservation of its genetic proximity to ftsY/ffh. May be a regulatory protein. The protein is UPF0122 protein SERP0802 of Staphylococcus epidermidis (strain ATCC 35984 / DSM 28319 / BCRC 17069 / CCUG 31568 / BM 3577 / RP62A).